The sequence spans 242 residues: Type III pantothenate kinase (242 aa).

Residue 7–14 (DLGNSRFK) participates in ATP binding. Substrate-binding positions include Y91 and 98 to 101 (GVDR). D100 functions as the Proton acceptor in the catalytic mechanism. Residue T121 coordinates ATP. T171 contacts substrate.

Belongs to the type III pantothenate kinase family. Homodimer. NH4(+) serves as cofactor. The cofactor is K(+).

The protein localises to the cytoplasm. The enzyme catalyses (R)-pantothenate + ATP = (R)-4'-phosphopantothenate + ADP + H(+). The protein operates within cofactor biosynthesis; coenzyme A biosynthesis; CoA from (R)-pantothenate: step 1/5. Functionally, catalyzes the phosphorylation of pantothenate (Pan), the first step in CoA biosynthesis. The protein is Type III pantothenate kinase of Xanthomonas axonopodis pv. citri (strain 306).